Here is a 304-residue protein sequence, read N- to C-terminus: Ornithine carbamoyltransferase (304 aa).

Carbamoyl phosphate-binding positions include 51–54 (STRT), glutamine 78, arginine 102, and 129–132 (HPVQ). L-ornithine-binding positions include asparagine 157, aspartate 221, and 225–226 (SM). Residues 261–262 (CL) and arginine 289 contribute to the carbamoyl phosphate site.

This sequence belongs to the aspartate/ornithine carbamoyltransferase superfamily. OTCase family.

It localises to the cytoplasm. It catalyses the reaction carbamoyl phosphate + L-ornithine = L-citrulline + phosphate + H(+). The protein operates within amino-acid degradation; L-arginine degradation via ADI pathway; carbamoyl phosphate from L-arginine: step 2/2. Functionally, reversibly catalyzes the transfer of the carbamoyl group from carbamoyl phosphate (CP) to the N(epsilon) atom of ornithine (ORN) to produce L-citrulline. The polypeptide is Ornithine carbamoyltransferase (Campylobacter curvus (strain 525.92)).